Here is a 194-residue protein sequence, read N- to C-terminus: Histone H1 (194 aa).

Alanine 1 is subject to N-acetylalanine; partial. Positions 1 to 14 (AEVAPAPAAAAPAK) are enriched in low complexity. 2 disordered regions span residues 1-31 (AEVA…GPAV) and 105-194 (AKKP…AAKK). Positions 15-26 (APKKKAAAKPKK) are enriched in basic residues. The 74-residue stretch at 27 to 100 (SGPAVGELAG…GASGSFKLNK (74 aa)) folds into the H15 domain. The segment covering 116 to 194 (KAKKVAAKKP…KVKKPAAAKK (79 aa)) has biased composition (basic residues). Phosphoserine is present on residues serine 145, serine 161, and serine 182.

Belongs to the histone H1/H5 family.

It is found in the nucleus. It localises to the chromosome. In terms of biological role, histones H1 are necessary for the condensation of nucleosome chains into higher-order structures. The protein is Histone H1 of Salmo trutta (Brown trout).